The sequence spans 154 residues: uncharacterized protein (154 aa).

Residues 13 to 128 form the HotDog ACOT-type domain; it reads SKGVLLLRTL…VFTFVAVDNN (116 aa).

It belongs to the acyl coenzyme A hydrolase family.

This is an uncharacterized protein from Haemophilus influenzae (strain ATCC 51907 / DSM 11121 / KW20 / Rd).